A 133-amino-acid chain; its full sequence is DUF35 domain-containing scaffold protein (133 aa).

Zn(2+)-binding residues include Cys23, Cys26, Cys37, and Cys40.

This sequence belongs to the scaffold protein DUF35 family. Interacts with acetoacetyl-CoA thiolase and HMG-CoA synthase (HMGCS) that catalyzes the first and second step in the mevalonate pathway, respectively.

In terms of biological role, functions as a scaffold to connect the acetoacetyl-CoA thiolase and HMG-CoA synthase (HMGCS) dimers in the channeling thiolase/HMGCS complex, which allows for efficient coupling of the endergonic thiolase reaction with the exergonic HMGCS reaction. The chain is DUF35 domain-containing scaffold protein from Methanothermobacter thermautotrophicus (strain ATCC 29096 / DSM 1053 / JCM 10044 / NBRC 100330 / Delta H) (Methanobacterium thermoautotrophicum).